Consider the following 630-residue polypeptide: Very-long-chain aldehyde decarbonylase GL1-7 (630 aa).

A run of 4 helical transmembrane segments spans residues 93-113 (LYLD…YAII), 126-146 (GALI…YWFH), 185-205 (FLLF…SVLA), and 325-345 (VWYM…AWIY). A Fatty acid hydroxylase domain is found at 133–272 (LHMGPVEFLY…MPFYDYIYNT (140 aa)).

The protein belongs to the sterol desaturase family. In terms of assembly, homodimer. As to expression, expressed in panicles at low levels.

Its subcellular location is the endoplasmic reticulum membrane. It catalyses the reaction a long-chain fatty aldehyde + 2 NADPH + O2 + H(+) = a long-chain alkane + formate + 2 NADP(+) + H2O. Its function is as follows. Aldehyde decarbonylase involved in the conversion of aldehydes to alkanes. Core component of a very-long-chain alkane synthesis complex. In Oryza sativa subsp. japonica (Rice), this protein is Very-long-chain aldehyde decarbonylase GL1-7.